We begin with the raw amino-acid sequence, 508 residues long: Photosystem II CP47 reaction center protein (508 aa).

6 helical membrane passes run 21–36 (SVHIMHTALVSGWAGS), 101–115 (IVFSGLCFLAAIWHW), 140–156 (GIHLFLSGVACFGFGAF), 203–218 (IAAGTLGILAGLFHLS), 237–252 (VLSSSIAAVFFAAFVV), and 457–472 (SFALLFFFGHIWHGAR).

Belongs to the PsbB/PsbC family. PsbB subfamily. As to quaternary structure, PSII is composed of 1 copy each of membrane proteins PsbA, PsbB, PsbC, PsbD, PsbE, PsbF, PsbH, PsbI, PsbJ, PsbK, PsbL, PsbM, PsbT, PsbX, PsbY, PsbZ, Psb30/Ycf12, at least 3 peripheral proteins of the oxygen-evolving complex and a large number of cofactors. It forms dimeric complexes. Requires Binds multiple chlorophylls. PSII binds additional chlorophylls, carotenoids and specific lipids. as cofactor.

The protein resides in the plastid. Its subcellular location is the chloroplast thylakoid membrane. One of the components of the core complex of photosystem II (PSII). It binds chlorophyll and helps catalyze the primary light-induced photochemical processes of PSII. PSII is a light-driven water:plastoquinone oxidoreductase, using light energy to abstract electrons from H(2)O, generating O(2) and a proton gradient subsequently used for ATP formation. The chain is Photosystem II CP47 reaction center protein from Nuphar advena (Common spatterdock).